The chain runs to 75 residues: Tautomerase PptA (75 aa).

Residue P2 is the Proton acceptor; via imino nitrogen of the active site.

Belongs to the 4-oxalocrotonate tautomerase family. PptA subfamily. Homodimer.

Its subcellular location is the cytoplasm. The protein is Tautomerase PptA of Klebsiella pneumoniae (strain 342).